Consider the following 458-residue polypeptide: Exodeoxyribonuclease 7 large subunit (458 aa).

Belongs to the XseA family. In terms of assembly, heterooligomer composed of large and small subunits.

Its subcellular location is the cytoplasm. The catalysed reaction is Exonucleolytic cleavage in either 5'- to 3'- or 3'- to 5'-direction to yield nucleoside 5'-phosphates.. In terms of biological role, bidirectionally degrades single-stranded DNA into large acid-insoluble oligonucleotides, which are then degraded further into small acid-soluble oligonucleotides. The sequence is that of Exodeoxyribonuclease 7 large subunit from Stutzerimonas stutzeri (strain A1501) (Pseudomonas stutzeri).